The following is a 170-amino-acid chain: Superoxide dismutase [Fe] (170 aa).

Positions 27, 81, 163, and 167 each coordinate Fe cation.

It belongs to the iron/manganese superoxide dismutase family. Homodimer. Requires Fe cation as cofactor.

The catalysed reaction is 2 superoxide + 2 H(+) = H2O2 + O2. Its function is as follows. Destroys superoxide anion radicals which are normally produced within the cells and which are toxic to biological systems. This chain is Superoxide dismutase [Fe] (sodA), found in Raoultella planticola (Klebsiella planticola).